The following is a 532-amino-acid chain: MAKIKRALISVSDKTGLVPFCQGLAEHGVSFLSTGGTARLLRESGLDVMDVSEFTGFPEMLDGRVKTLHPKVHGGLLGLRDNASHQQQMGEHGIEPIDMVVVNLYPFEATVAKEGCTLEEAIENIDIGGPSMLRSAAKNYRSVTVVTDPADYARVLESLRAHDGQCDAGLNAQLARKVYARTAAYDAAISNWLSALDNEGRPGAFPETYTVQFKKVQGMRYGENPHQSAAFYAESPPSEEASLATATQLQGKELSFNNIHDANGALELVKEFSKPAAVVVKHANPCGVAVHDGDLLAAYRMARDTDPVSAFGGIIALNRCVDVAVAKEIAQLFVEVIIAPEYDEQALELFATKKNLRLLRVPNIGVATAVSTMDLKRVTGGLLLQDRDLKQLPEGSLKVVTERAPSEAEMRDLLFAWKVVKHVKSNAIVYAKEQRTLGVGAGQMSRVDASRIAVWKAQDTAHTAGLRENPLLGAAMASDAFFPFRDGVDAAAKAGAKAVIQPGGSVRDEEVIAAANEHGMAMVFTGMRHFKH.

Residues methionine 1–threonine 147 form the MGS-like domain.

The protein belongs to the PurH family.

The enzyme catalyses (6R)-10-formyltetrahydrofolate + 5-amino-1-(5-phospho-beta-D-ribosyl)imidazole-4-carboxamide = 5-formamido-1-(5-phospho-D-ribosyl)imidazole-4-carboxamide + (6S)-5,6,7,8-tetrahydrofolate. The catalysed reaction is IMP + H2O = 5-formamido-1-(5-phospho-D-ribosyl)imidazole-4-carboxamide. It functions in the pathway purine metabolism; IMP biosynthesis via de novo pathway; 5-formamido-1-(5-phospho-D-ribosyl)imidazole-4-carboxamide from 5-amino-1-(5-phospho-D-ribosyl)imidazole-4-carboxamide (10-formyl THF route): step 1/1. Its pathway is purine metabolism; IMP biosynthesis via de novo pathway; IMP from 5-formamido-1-(5-phospho-D-ribosyl)imidazole-4-carboxamide: step 1/1. This chain is Bifunctional purine biosynthesis protein PurH, found in Magnetococcus marinus (strain ATCC BAA-1437 / JCM 17883 / MC-1).